A 341-amino-acid polypeptide reads, in one-letter code: N-acetyl-gamma-glutamyl-phosphate reductase (341 aa).

Cysteine 145 is a catalytic residue.

The protein belongs to the NAGSA dehydrogenase family. Type 1 subfamily.

The protein localises to the cytoplasm. It carries out the reaction N-acetyl-L-glutamate 5-semialdehyde + phosphate + NADP(+) = N-acetyl-L-glutamyl 5-phosphate + NADPH + H(+). It functions in the pathway amino-acid biosynthesis; L-arginine biosynthesis; N(2)-acetyl-L-ornithine from L-glutamate: step 3/4. Functionally, catalyzes the NADPH-dependent reduction of N-acetyl-5-glutamyl phosphate to yield N-acetyl-L-glutamate 5-semialdehyde. The polypeptide is N-acetyl-gamma-glutamyl-phosphate reductase (Methanothrix thermoacetophila (strain DSM 6194 / JCM 14653 / NBRC 101360 / PT) (Methanosaeta thermophila)).